The chain runs to 120 residues: Large ribosomal subunit protein uL22 (120 aa).

A disordered region spans residues Met-1–Arg-22.

It belongs to the universal ribosomal protein uL22 family. Part of the 50S ribosomal subunit.

In terms of biological role, this protein binds specifically to 23S rRNA; its binding is stimulated by other ribosomal proteins, e.g. L4, L17, and L20. It is important during the early stages of 50S assembly. It makes multiple contacts with different domains of the 23S rRNA in the assembled 50S subunit and ribosome. The globular domain of the protein is located near the polypeptide exit tunnel on the outside of the subunit, while an extended beta-hairpin is found that lines the wall of the exit tunnel in the center of the 70S ribosome. The sequence is that of Large ribosomal subunit protein uL22 from Borreliella burgdorferi (strain ATCC 35210 / DSM 4680 / CIP 102532 / B31) (Borrelia burgdorferi).